A 451-amino-acid polypeptide reads, in one-letter code: MVGSALRRGAHAYVYLVSKASHISRGHQHQAWGSRPPAAECATQRAPGSVVELLGKSYPQDDHSNLTRKVLTRVGRNLHNQQHHPLWLIKERVKEHFYKQYVGRFGTPLFSVYDNLSPVVTTWQNFDSLLIPADHPSRKKGDNYYLNRTHMLRAHTSAHQWDLLHAGLDAFLVVGDVYRRDQIDSQHYPIFHQLEAVRLFSKHELFAGIKDGESLQLFEQSSRSAHKQETHTMEAVKLVEFDLKQTLTRLMAHLFGDELEIRWVDCYFPFTHPSFEMEINFHGEWLEVLGCGVMEQQLVNSAGAQDRIGWAFGLGLERLAMILYDIPDIRLFWCEDERFLKQFCVSNINQKVKFQPLSKYPAVINDISFWLPSENYAENDFYDLVRTIGGDLVEKVDLIDKFVHPKTHKTSHCYRITYRHMERTLSQREVRHIHQALQEAAVQLLGVEGRF.

Substrate is bound by residues 157-160 (SAHQ), Arg179, 186-188 (QHY), and 193-195 (QLE). Lys202 carries the N6-acetyllysine modification. Residues Glu287 and Phe312 each coordinate substrate. An FDX-ACB domain is found at 358-450 (SKYPAVINDI…AVQLLGVEGR (93 aa)).

This sequence belongs to the class-II aminoacyl-tRNA synthetase family. As to quaternary structure, monomer.

Its subcellular location is the mitochondrion matrix. The protein localises to the mitochondrion. It carries out the reaction tRNA(Phe) + L-phenylalanine + ATP = L-phenylalanyl-tRNA(Phe) + AMP + diphosphate + H(+). Functionally, is responsible for the charging of tRNA(Phe) with phenylalanine in mitochondrial translation. To a lesser extent, also catalyzes direct attachment of m-Tyr (an oxidized version of Phe) to tRNA(Phe), thereby opening the way for delivery of the misacylated tRNA to the ribosome and incorporation of ROS-damaged amino acid into proteins. This is Phenylalanine--tRNA ligase, mitochondrial (FARS2) from Homo sapiens (Human).